Here is a 175-residue protein sequence, read N- to C-terminus: Ribosome maturation factor RimM (175 aa).

Positions 99 to 172 (ADEYHVSDLI…RLEVDAPPGL (74 aa)) constitute a PRC barrel domain.

It belongs to the RimM family. Binds ribosomal protein uS19.

The protein resides in the cytoplasm. An accessory protein needed during the final step in the assembly of 30S ribosomal subunit, possibly for assembly of the head region. Essential for efficient processing of 16S rRNA. May be needed both before and after RbfA during the maturation of 16S rRNA. It has affinity for free ribosomal 30S subunits but not for 70S ribosomes. The chain is Ribosome maturation factor RimM from Picosynechococcus sp. (strain ATCC 27264 / PCC 7002 / PR-6) (Agmenellum quadruplicatum).